The chain runs to 266 residues: MAAVRVLVSPRLASALLPLSGRHRTTSQRAAIHSSAPRPRARVALVLSGCGVYDGTEIHEASAILVHLSRGGAEVHIFAPDVPQMHVIDHTKGEPSEKESRNVLAESARIARGKITNLAQLSAANHDAAIFPGGFGAAKNLSTFAVDGKDCKVNKEVERVLKEFHGAKKPIGLCCIAPVLAAKVIKGVEVTVGHEQEEGGKWPYAGTAEAVKALGAKHCVKGVTEAHVDQKNKVVTTPAFMCETELHHIHDGIGAMVKKVLELTGK.

The transit peptide at 1-39 (MAAVRVLVSPRLASALLPLSGRHRTTSQRAAIHSSAPRP) directs the protein to the mitochondrion. N6-acetyllysine occurs at positions 149, 155, and 162. N6-acetyllysine; alternate is present on Lys201. Lys201 carries the N6-succinyllysine; alternate modification. Lys217 carries the N6-acetyllysine modification. N6-acetyllysine; alternate is present on residues Lys221 and Lys231. N6-succinyllysine; alternate is present on residues Lys221 and Lys231.

The protein belongs to the ES1 family.

The protein localises to the mitochondrion. This Rattus norvegicus (Rat) protein is ES1 protein homolog, mitochondrial.